Here is a 59-residue protein sequence, read N- to C-terminus: Cuticle protein 7 isoform c (59 aa).

Residue glutamine 1 is modified to Pyrrolidone carboxylic acid.

This is Cuticle protein 7 isoform c from Limulus polyphemus (Atlantic horseshoe crab).